A 182-amino-acid polypeptide reads, in one-letter code: UPF0398 protein lwe1908 (182 aa).

This sequence belongs to the UPF0398 family.

This is UPF0398 protein lwe1908 from Listeria welshimeri serovar 6b (strain ATCC 35897 / DSM 20650 / CCUG 15529 / CIP 8149 / NCTC 11857 / SLCC 5334 / V8).